The sequence spans 751 residues: Zinc finger protein 337 (751 aa).

Residues 12–83 (LAFGDVTVDF…ERRRRPGPCA (72 aa)) enclose the KRAB domain. The span at 101–116 (QRQQQLQFSDQSFQSD) shows a compositional bias: low complexity. Residues 101–163 (QRQQQLQFSD…SSQGQRENPT (63 aa)) form a disordered region. A C2H2-type 1; degenerate zinc finger spans residues 180-202 (FKCAERGQDFSRKMMVIIHKKAH). 9 C2H2-type zinc fingers span residues 208-230 (FTCR…QNTH), 236-258 (YVCS…QRTH), 264-286 (FLCK…ERTH), 292-314 (YECQ…LKAH), 320-342 (FVCK…KRIH), 348-370 (YRCQ…QRTH), 376-398 (FACR…QRTH), 404-426 (FVCK…QRTH), and 432-454 (FVCR…QITH). Residue Lys458 forms a Glycyl lysine isopeptide (Lys-Gly) (interchain with G-Cter in SUMO2) linkage. 10 consecutive C2H2-type zinc fingers follow at residues 460-482 (FVCK…QRTH), 488-510 (YGCR…LRAH), 516-538 (FFCR…QRTH), 544-566 (FMCK…QWTH), 572-594 (FNCK…QKTH), 600-622 (FICS…QLAH), 628-650 (FVCK…QRTH), 656-679 (FVCN…WRIH), 685-707 (FVCQ…ERIH), and 713-735 (YECQ…LKRH).

Belongs to the krueppel C2H2-type zinc-finger protein family.

The protein resides in the nucleus. In terms of biological role, may be involved in transcriptional regulation. In Homo sapiens (Human), this protein is Zinc finger protein 337 (ZNF337).